Reading from the N-terminus, the 341-residue chain is Biotin synthase (341 aa).

The Radical SAM core domain maps to 40–267; sequence AEIQVSTLLS…RSMVRLSAGR (228 aa). Cys55, Cys59, and Cys62 together coordinate [4Fe-4S] cluster. The [2Fe-2S] cluster site is built by Cys99, Cys130, Cys190, and Arg262.

This sequence belongs to the radical SAM superfamily. Biotin synthase family. As to quaternary structure, homodimer. Requires [4Fe-4S] cluster as cofactor. [2Fe-2S] cluster is required as a cofactor.

It carries out the reaction (4R,5S)-dethiobiotin + (sulfur carrier)-SH + 2 reduced [2Fe-2S]-[ferredoxin] + 2 S-adenosyl-L-methionine = (sulfur carrier)-H + biotin + 2 5'-deoxyadenosine + 2 L-methionine + 2 oxidized [2Fe-2S]-[ferredoxin]. The protein operates within cofactor biosynthesis; biotin biosynthesis; biotin from 7,8-diaminononanoate: step 2/2. Functionally, catalyzes the conversion of dethiobiotin (DTB) to biotin by the insertion of a sulfur atom into dethiobiotin via a radical-based mechanism. The protein is Biotin synthase of Xylella fastidiosa (strain M12).